A 268-amino-acid chain; its full sequence is Putative ABC transporter ATP-binding protein LMOf2365_1216 (268 aa).

The region spanning 2-237 (LKTEHISFQY…KSNVEQAGLV (236 aa)) is the ABC transporter domain. 35–42 (GANGSGKS) is an ATP binding site.

The protein belongs to the ABC transporter superfamily.

It localises to the cell membrane. Its function is as follows. Probably part of an ABC transporter complex. Responsible for energy coupling to the transport system. This chain is Putative ABC transporter ATP-binding protein LMOf2365_1216, found in Listeria monocytogenes serotype 4b (strain F2365).